The sequence spans 304 residues: Recombination-associated protein RdgC (304 aa).

It belongs to the RdgC family.

It is found in the cytoplasm. Its subcellular location is the nucleoid. May be involved in recombination. The protein is Recombination-associated protein RdgC of Shewanella baltica (strain OS185).